Consider the following 471-residue polypeptide: DENN domain-containing protein 2D (471 aa).

Residues E55–T204 enclose the uDENN domain. One can recognise a cDENN domain in the interval H226 to G359. The 85-residue stretch at G361–P445 folds into the dDENN domain.

In bronchial mucosa, mainly expressed in ciliated and basal epithelial cells and weakly in alveolar cells (at protein level). Tends to be down-regulated in lung cancers, immortalized bronchial epithelial cell lines and precancerous lesions.

It is found in the cytoplasm. In terms of biological role, guanine nucleotide exchange factor (GEF) which may activate RAB9A and RAB9B. Promotes the exchange of GDP to GTP, converting inactive GDP-bound Rab proteins into their active GTP-bound form. The sequence is that of DENN domain-containing protein 2D (DENND2D) from Homo sapiens (Human).